The sequence spans 564 residues: Septation ring formation regulator EzrA (564 aa).

The Extracellular portion of the chain corresponds to Met-1–Phe-4. A helical transmembrane segment spans residues Ile-5–Met-23. Residues Arg-24 to Glu-564 are Cytoplasmic-facing. 4 coiled-coil regions span residues Val-84–Thr-126, Glu-165–Glu-223, Met-271–Lys-303, and Val-350–Leu-435.

The protein belongs to the EzrA family.

The protein resides in the cell membrane. Its function is as follows. Negative regulator of FtsZ ring formation; modulates the frequency and position of FtsZ ring formation. Inhibits FtsZ ring formation at polar sites. Interacts either with FtsZ or with one of its binding partners to promote depolymerization. The polypeptide is Septation ring formation regulator EzrA (Staphylococcus epidermidis (strain ATCC 12228 / FDA PCI 1200)).